Reading from the N-terminus, the 533-residue chain is Methyl-accepting chemotaxis protein IV (533 aa).

The Cytoplasmic portion of the chain corresponds to 1–6; sequence MFNRIR. The helical transmembrane segment at 7-33 threads the bilayer; it reads ISTTLFLILILCGILQIGSNGMSFWAF. The Periplasmic portion of the chain corresponds to 34–188; sequence RDDLQRLNQV…AQSQRNYQIS (155 aa). Residues 189–209 form a helical membrane-spanning segment; the sequence is ALVFISMIIVAAIYISSALWW. Residues 210–533 lie on the Cytoplasmic side of the membrane; the sequence is TRKMIVQPLA…VQLQIAPVVS (324 aa). An HAMP domain is found at 212-264; it reads KMIVQPLAIIGSHFDSIAAGNLARPIAVYGRNEITAIFASLKTMQQALRGTVS. The Methyl-accepting transducer domain maps to 269–498; it reads GSQEMHIGIA…EAAVATEQLA (230 aa). 3 positions are modified to glutamate methyl ester (Gln): Gln293, Gln300, and Gln307. The residue at position 489 (Glu489) is a Glutamate methyl ester (Glu).

This sequence belongs to the methyl-accepting chemotaxis (MCP) protein family.

Its subcellular location is the cell inner membrane. Mediates taxis toward dipeptides via an interaction with the periplasmic dipeptide-binding protein. In terms of biological role, chemotactic-signal transducers respond to changes in the concentration of attractants and repellents in the environment, transduce a signal from the outside to the inside of the cell, and facilitate sensory adaptation through the variation of the level of methylation. Attractants increase the level of methylation while repellents decrease the level of methylation, the methyl groups are added by the methyltransferase CheR and removed by the methylesterase CheB. This chain is Methyl-accepting chemotaxis protein IV (tap), found in Escherichia coli (strain K12).